The following is a 456-amino-acid chain: Bifunctional protein GlmU (456 aa).

The pyrophosphorylase stretch occupies residues Met1–Arg229. Residues Leu11–Gly14, Lys25, Gln76, Gly81–Thr82, Tyr103–Asp105, Gly140, Glu154, Asn169, and Asn227 each bind UDP-N-acetyl-alpha-D-glucosamine. Position 105 (Asp105) interacts with Mg(2+). Asn227 contributes to the Mg(2+) binding site. The segment at Leu230–Ser250 is linker. The N-acetyltransferase stretch occupies residues Gly251–Lys456. UDP-N-acetyl-alpha-D-glucosamine-binding residues include Arg333 and Lys351. His363 serves as the catalytic Proton acceptor. Tyr366 and Asn377 together coordinate UDP-N-acetyl-alpha-D-glucosamine. Acetyl-CoA is bound by residues Ala380, Asn386–Tyr387, Ser405, Ala423, and Arg440.

The protein in the N-terminal section; belongs to the N-acetylglucosamine-1-phosphate uridyltransferase family. It in the C-terminal section; belongs to the transferase hexapeptide repeat family. In terms of assembly, homotrimer. Mg(2+) is required as a cofactor.

It localises to the cytoplasm. It catalyses the reaction alpha-D-glucosamine 1-phosphate + acetyl-CoA = N-acetyl-alpha-D-glucosamine 1-phosphate + CoA + H(+). It carries out the reaction N-acetyl-alpha-D-glucosamine 1-phosphate + UTP + H(+) = UDP-N-acetyl-alpha-D-glucosamine + diphosphate. It functions in the pathway nucleotide-sugar biosynthesis; UDP-N-acetyl-alpha-D-glucosamine biosynthesis; N-acetyl-alpha-D-glucosamine 1-phosphate from alpha-D-glucosamine 6-phosphate (route II): step 2/2. It participates in nucleotide-sugar biosynthesis; UDP-N-acetyl-alpha-D-glucosamine biosynthesis; UDP-N-acetyl-alpha-D-glucosamine from N-acetyl-alpha-D-glucosamine 1-phosphate: step 1/1. Its pathway is bacterial outer membrane biogenesis; LPS lipid A biosynthesis. Functionally, catalyzes the last two sequential reactions in the de novo biosynthetic pathway for UDP-N-acetylglucosamine (UDP-GlcNAc). The C-terminal domain catalyzes the transfer of acetyl group from acetyl coenzyme A to glucosamine-1-phosphate (GlcN-1-P) to produce N-acetylglucosamine-1-phosphate (GlcNAc-1-P), which is converted into UDP-GlcNAc by the transfer of uridine 5-monophosphate (from uridine 5-triphosphate), a reaction catalyzed by the N-terminal domain. This Salmonella gallinarum (strain 287/91 / NCTC 13346) protein is Bifunctional protein GlmU.